The following is a 209-amino-acid chain: Transcription elongation factor A protein-like 4 (209 aa).

Met1 carries the N-acetylmethionine modification. The disordered stretch occupies residues 1–125 (MEKLYNENEG…VPRKAKRKTN (125 aa)). Residues 25-96 (QDERKPEVAC…GSEREGKPES (72 aa)) are compositionally biased toward basic and acidic residues. 2 positions are modified to phosphoserine: Ser88 and Ser96.

The protein belongs to the TFS-II family. TFA subfamily.

It is found in the nucleus. May be involved in transcriptional regulation. The chain is Transcription elongation factor A protein-like 4 (TCEAL4) from Pongo abelii (Sumatran orangutan).